The primary structure comprises 194 residues: Lysozyme g-like protein 1 (194 aa).

The N-terminal stretch at 1–19 (MSALWLLLGLLALMDLSES) is a signal peptide. 2 cysteine pairs are disulfide-bonded: Cys-24–Cys-80 and Cys-38–Cys-49.

Belongs to the glycosyl hydrolase 23 family.

It is found in the secreted. The sequence is that of Lysozyme g-like protein 1 (LYG1) from Homo sapiens (Human).